The chain runs to 151 residues: Small ribosomal subunit protein uS9 (151 aa).

It belongs to the universal ribosomal protein uS9 family.

In Spodoptera frugiperda (Fall armyworm), this protein is Small ribosomal subunit protein uS9 (RpS16).